Reading from the N-terminus, the 81-residue chain is MSSKVQAVLLLVGVITFLAVHAQEELSENTESERSCARLYERCSMTRRPCCNNVPYVCSLLGTYCECKKGLIQTVGDFIGI.

The first 22 residues, 1-22, serve as a signal peptide directing secretion; sequence MSSKVQAVLLLVGVITFLAVHA. The propeptide occupies 23 to 34; that stretch reads QEELSENTESER. 3 cysteine pairs are disulfide-bonded: Cys36–Cys51, Cys50–Cys67, and Cys58–Cys65.

This sequence belongs to the neurotoxin 02 (plectoxin) family. As to expression, expressed by the venom gland.

The protein resides in the secreted. The sequence is that of U17-lycotoxin-Ls1a from Lycosa singoriensis (Wolf spider).